A 536-amino-acid polypeptide reads, in one-letter code: Potassium voltage-gated channel protein shk-1 (536 aa).

Disordered regions lie at residues 1–31 (MRFG…NKEK) and 87–131 (AAEM…HPYT). Topologically, residues 1–275 (MRFGGQRRCI…EYPDSSLSAR (275 aa)) are cytoplasmic. Residues 116–131 (QRGTPDTSSTQGHPYT) show a composition bias toward polar residues. Residues 276-296 (IIAFISIAVIALSIISFCWET) traverse the membrane as a helical segment. The Extracellular portion of the chain corresponds to 297–322 (VPSDIEEKPINNSATAELLDEMDEKH). The helical transmembrane segment at 323–343 (YSPFFWIELMCILWFTIELIL) threads the bilayer. At 344–356 (RFISCPCKVTFAT) the chain is on the cytoplasmic side. A helical membrane pass occupies residues 357–377 (SVLNIIDFVAIAPFFVNFFFA). Residues 378-425 (DTSKSNSSMSFAVLRVLRLVRVFRVFKLSRHSVGLQILGKTFRSSVQE) lie on the Extracellular side of the membrane. A helical; Voltage-sensor transmembrane segment spans residues 426–446 (FCLLIFFMAIALVLFASGMYF). The Cytoplasmic portion of the chain corresponds to 447-458 (AEQGEPNSKFTS). Residues 459 to 479 (IPASFWFVLVTMTTVGYGDLV) traverse the membrane as a helical segment. Topologically, residues 480 to 486 (PLSPFGK) are extracellular. Residues 487 to 507 (VVGGMCAMIGVLTLALPVPII) traverse the membrane as a helical segment. Over 508 to 536 (VANFKHFYRQENRLASMKSKGDDADDDIA) the chain is Cytoplasmic.

This sequence belongs to the potassium channel family. A (Shaker) (TC 1.A.1.2) subfamily. Shaker sub-subfamily. In terms of tissue distribution, expressed in a variety of interneurons and sensory neurons, as well as body wall muscle.

The protein resides in the membrane. Functionally, mediates the voltage-dependent potassium ion permeability of excitable membranes. Has an important role in repolarization and in regulating the pattern of action potential firing. Isoform a expresses currents in a more depolarized voltage range than isoform d. This is Potassium voltage-gated channel protein shk-1 from Caenorhabditis elegans.